The chain runs to 269 residues: Dermonecrotic toxin SpeSicTox-betaIB3 (269 aa).

The active site involves histidine 5. Mg(2+)-binding residues include glutamate 25 and aspartate 27. The Nucleophile role is filled by histidine 41. 2 disulfides stabilise this stretch: cysteine 45–cysteine 51 and cysteine 47–cysteine 191. Aspartate 85 is a Mg(2+) binding site.

The protein belongs to the arthropod phospholipase D family. Class II subfamily. It depends on Mg(2+) as a cofactor. Expressed by the venom gland.

It localises to the secreted. It carries out the reaction an N-(acyl)-sphingosylphosphocholine = an N-(acyl)-sphingosyl-1,3-cyclic phosphate + choline. It catalyses the reaction an N-(acyl)-sphingosylphosphoethanolamine = an N-(acyl)-sphingosyl-1,3-cyclic phosphate + ethanolamine. The enzyme catalyses a 1-acyl-sn-glycero-3-phosphocholine = a 1-acyl-sn-glycero-2,3-cyclic phosphate + choline. The catalysed reaction is a 1-acyl-sn-glycero-3-phosphoethanolamine = a 1-acyl-sn-glycero-2,3-cyclic phosphate + ethanolamine. Its function is as follows. Dermonecrotic toxins cleave the phosphodiester linkage between the phosphate and headgroup of certain phospholipids (sphingolipid and lysolipid substrates), forming an alcohol (often choline) and a cyclic phosphate. This toxin acts on sphingomyelin (SM). It may also act on ceramide phosphoethanolamine (CPE), lysophosphatidylcholine (LPC) and lysophosphatidylethanolamine (LPE), but not on lysophosphatidylserine (LPS), and lysophosphatidylglycerol (LPG). It acts by transphosphatidylation, releasing exclusively cyclic phosphate products as second products. Induces dermonecrosis, hemolysis, increased vascular permeability, edema, inflammatory response, and platelet aggregation. In Sicarius peruensis (Six-eyed sand spider), this protein is Dermonecrotic toxin SpeSicTox-betaIB3.